The primary structure comprises 226 residues: Putative 5'-nucleotidase alr3139 (226 aa).

Asp-8, Asp-9, Ser-38, and Asn-89 together coordinate a divalent metal cation.

This sequence belongs to the SurE nucleotidase family. A divalent metal cation serves as cofactor.

It localises to the cytoplasm. It carries out the reaction a ribonucleoside 5'-phosphate + H2O = a ribonucleoside + phosphate. Nucleotidase that shows phosphatase activity on nucleoside 5'-monophosphates. The sequence is that of Putative 5'-nucleotidase alr3139 from Nostoc sp. (strain PCC 7120 / SAG 25.82 / UTEX 2576).